Consider the following 308-residue polypeptide: Olfactory receptor 5H8 (308 aa).

The Extracellular portion of the chain corresponds to 1 to 28 (MDDENATLLTEFVLTGLTYQSEWKIPLF). The chain crosses the membrane as a helical span at residues 29–49 (LAFLVIYLITIMANLGLIAVI). At 50–56 (WKDSHLH) the chain is on the cytoplasmic side. The chain crosses the membrane as a helical span at residues 57–77 (IPMYLFLGSLAFVDAWLSSSV). Over 78–98 (TPKMLISFLAKSMIISVSECK) the chain is Extracellular. Cysteine 97 and cysteine 179 are oxidised to a cystine. A helical transmembrane segment spans residues 99–119 (IQFFSFGISGTTECFLLATMA). Topologically, residues 120-133 (YDRYVAICKPLLYP) are cytoplasmic. Residues 134–154 (VIMTNGLCIWLLVLSFIGGFL) traverse the membrane as a helical segment. The Extracellular segment spans residues 155 to 195 (HALIHEGILFRLTFCNSNIIHHFYCDIIPLLKISCTDPSIN). Residues 196–216 (FLMLFILSGSIQVFTILTVLV) form a helical membrane-spanning segment. The Cytoplasmic segment spans residues 217 to 238 (SYTFVLFTILKKKAKDIRKAFS). Residues 239–259 (TCGAHLLSVSLYYGPLLFMYV) form a helical membrane-spanning segment. Residues 260–270 (HPASPQADDQD) lie on the Extracellular side of the membrane. A helical membrane pass occupies residues 271–291 (MVESLFYTVIIPFLNPIIYSL). Topologically, residues 292-308 (RNKQVIDSLTKTLKGNV) are cytoplasmic.

It belongs to the G-protein coupled receptor 1 family.

The protein resides in the cell membrane. Odorant receptor. The polypeptide is Olfactory receptor 5H8 (Homo sapiens (Human)).